The chain runs to 382 residues: tRNA(Met) cytidine acetate ligase (382 aa).

ATP-binding positions include 9–22, Gly103, Asn152, and Arg177; that span reads VTEY…HAYQ.

It belongs to the TmcAL family.

The protein resides in the cytoplasm. The enzyme catalyses cytidine(34) in elongator tRNA(Met) + acetate + ATP = N(4)-acetylcytidine(34) in elongator tRNA(Met) + AMP + diphosphate. Its function is as follows. Catalyzes the formation of N(4)-acetylcytidine (ac(4)C) at the wobble position of elongator tRNA(Met), using acetate and ATP as substrates. First activates an acetate ion to form acetyladenylate (Ac-AMP) and then transfers the acetyl group to tRNA to form ac(4)C34. This Levilactobacillus brevis (strain ATCC 367 / BCRC 12310 / CIP 105137 / JCM 1170 / LMG 11437 / NCIMB 947 / NCTC 947) (Lactobacillus brevis) protein is tRNA(Met) cytidine acetate ligase.